A 417-amino-acid chain; its full sequence is Exodeoxyribonuclease 7 large subunit (417 aa).

This sequence belongs to the XseA family. In terms of assembly, heterooligomer composed of large and small subunits.

Its subcellular location is the cytoplasm. It carries out the reaction Exonucleolytic cleavage in either 5'- to 3'- or 3'- to 5'-direction to yield nucleoside 5'-phosphates.. In terms of biological role, bidirectionally degrades single-stranded DNA into large acid-insoluble oligonucleotides, which are then degraded further into small acid-soluble oligonucleotides. The polypeptide is Exodeoxyribonuclease 7 large subunit (Helicobacter hepaticus (strain ATCC 51449 / 3B1)).